A 338-amino-acid chain; its full sequence is Diacylglycerol acyltransferase/mycolyltransferase Ag85A (338 aa).

A signal peptide spans 1-42 (MQLVDRVRGAVTGMSRRLVVGAVGAALVSGLVGAVGGTATAG). 85–86 (LR) is a substrate binding site. The fibronectin-binding stretch occupies residues 101–111 (FEWYDQSGLSV). Residues Cys-130 and Cys-135 are joined by a disulfide bond. Residues Ser-169 and Asp-197 each contribute to the substrate site. The active-site Nucleophile is the Ser-169. The active site involves Glu-273. Residues 275–278 (FVRT), Lys-282, and 305–307 (HSW) each bind substrate. The active site involves His-305.

The protein belongs to the mycobacterial A85 antigen family. Homodimer.

The protein localises to the secreted. The protein resides in the cell wall. Its subcellular location is the cytoplasm. It catalyses the reaction an acyl-CoA + a 1,2-diacyl-sn-glycerol = a triacyl-sn-glycerol + CoA. The enzyme catalyses 2 alpha,alpha'-trehalose 6-mycolate = alpha,alpha'-trehalose 6,6'-bismycolate + alpha,alpha-trehalose. In terms of biological role, the antigen 85 proteins (FbpA, FbpB, FbpC) are responsible for the high affinity of mycobacteria for fibronectin, a large adhesive glycoprotein, which facilitates the attachment of M.tuberculosis to murine alveolar macrophages (AMs). They also help to maintain the integrity of the cell wall by catalyzing the transfer of mycolic acids to cell wall arabinogalactan, and through the synthesis of alpha,alpha-trehalose dimycolate (TDM, cord factor). They catalyze the transfer of a mycoloyl residue from one molecule of alpha,alpha-trehalose monomycolate (TMM) to another TMM, leading to the formation of TDM. FbpA mediates triacylglycerol (TAG) formation with long-chain acyl-CoA as the acyl donor and 1,2-dipalmitoyl-sn-glycerol (1,2-dipalmitin) as the acyl acceptor. It has a preference for C26:0-CoA over C18:1-CoA. In Mycobacterium bovis (strain ATCC BAA-935 / AF2122/97), this protein is Diacylglycerol acyltransferase/mycolyltransferase Ag85A (fbpA).